Here is a 279-residue protein sequence, read N- to C-terminus: Putative hydroxypyruvate isomerase (279 aa).

Active-site proton donor/acceptor residues include glutamate 155 and glutamate 256. Positions 260-279 are disordered; the sequence is GDDPSAQSFSWLPAGARAAR.

Belongs to the hyi family.

It catalyses the reaction 3-hydroxypyruvate = 2-hydroxy-3-oxopropanoate. In terms of biological role, catalyzes the reversible isomerization between hydroxypyruvate and 2-hydroxy-3-oxopropanoate (also termed tartronate semialdehyde). The chain is Putative hydroxypyruvate isomerase from Streptomyces coelicolor (strain ATCC BAA-471 / A3(2) / M145).